Consider the following 192-residue polypeptide: Early nodulin-like protein 7 (192 aa).

The N-terminal stretch at 1–27 (MMMMMMRSTCNLTLMLCICALVVASMA) is a signal peptide. A Phytocyanin domain is found at 32–134 (RDFKVGDEFG…GQRLIVEVMH (103 aa)). N-linked (GlcNAc...) asparagine glycosylation is found at Asn48, Asn89, and Asn101. Residues Cys88 and Cys122 are joined by a disulfide bond. Residue Ser166 is the site of GPI-anchor amidated serine attachment. The propeptide at 167–192 (AASSLPTACLLIPLFLTIASFRFISY) is removed in mature form.

The protein belongs to the early nodulin-like (ENODL) family. As to expression, mostly expressed in flowers, and, to a lower extent, in seeds, but barely in seedlings, stems, leaves and roots.

It is found in the cell membrane. Functionally, may act as a carbohydrate transporter. The protein is Early nodulin-like protein 7 of Arabidopsis thaliana (Mouse-ear cress).